The chain runs to 20 residues: Protein C activator (20 aa).

The region spanning 1 to 20 (VVGGDECNINEHRSLALMYA) is the Peptidase S1 domain.

It belongs to the peptidase S1 family. Snake venom subfamily. Monomer. Post-translationally, glycosylated. In terms of tissue distribution, expressed by the venom gland.

It is found in the secreted. With respect to regulation, inhibited by calcium. Snake venom serine protease that selectively cleaves the heavy chain of protein C (PROC). This activation is thrombomodulin-independent. In Agkistrodon bilineatus (Cantil), this protein is Protein C activator.